We begin with the raw amino-acid sequence, 458 residues long: F-box/FBD/LRR-repeat protein At1g78750 (458 aa).

The region spanning 17-67 is the F-box domain; sequence VDWISNLPETLLCQVLFYLPTKDVVKSSVLSSRWRNLWKYVPGFNLSYCDF. 5 LRR repeats span residues 152–183, 184–209, 231–258, 302–327, and 345–370; these read CETL…HLSI, VKFA…NINR, VADT…RLSD, DFLV…YDYS, and FYGY…VVGS. The FBD domain maps to 376–428; sequence KEGINILSVPRGFLSSLEYVKIERPLKGEAMEMKLVSYLLENSTILKKLTLCL.

The sequence is that of F-box/FBD/LRR-repeat protein At1g78750 from Arabidopsis thaliana (Mouse-ear cress).